A 295-amino-acid chain; its full sequence is Protoheme IX farnesyltransferase (295 aa).

The next 7 membrane-spanning stretches (helical) occupy residues 43-63 (PIQLALLVLGTSAAAGGVAAL), 92-112 (SAFVLGVLMCIGSLFLLYALV), 114-134 (PLAALFTLLTIFSYLGWYTPA), 140-160 (WSTEIGAVAGAFPPLIGWSAG), 166-186 (ALGWVLFGVLFFWQVPHFMAV), 231-251 (LLWGLTTWFYGVAAAVTGLWF), and 272-292 (FFASIGYLPLVLGALVIDRLF).

The protein belongs to the UbiA prenyltransferase family. Protoheme IX farnesyltransferase subfamily.

It localises to the cell inner membrane. The enzyme catalyses heme b + (2E,6E)-farnesyl diphosphate + H2O = Fe(II)-heme o + diphosphate. It functions in the pathway porphyrin-containing compound metabolism; heme O biosynthesis; heme O from protoheme: step 1/1. Functionally, converts heme B (protoheme IX) to heme O by substitution of the vinyl group on carbon 2 of heme B porphyrin ring with a hydroxyethyl farnesyl side group. This Opitutus terrae (strain DSM 11246 / JCM 15787 / PB90-1) protein is Protoheme IX farnesyltransferase.